We begin with the raw amino-acid sequence, 1444 residues long: DNA polymerase III PolC-type (1444 aa).

Positions 196–218 are disordered; that stretch reads EAVQVMQKRQAEGQNGNSSAAPL. Polar residues predominate over residues 207-216; sequence EGQNGNSSAA. The Exonuclease domain occupies 428-584; sequence YCVFDVETTG…FDAEATAYLA (157 aa).

Belongs to the DNA polymerase type-C family. PolC subfamily.

It localises to the cytoplasm. It carries out the reaction DNA(n) + a 2'-deoxyribonucleoside 5'-triphosphate = DNA(n+1) + diphosphate. Its function is as follows. Required for replicative DNA synthesis. This DNA polymerase also exhibits 3' to 5' exonuclease activity. This Listeria welshimeri serovar 6b (strain ATCC 35897 / DSM 20650 / CCUG 15529 / CIP 8149 / NCTC 11857 / SLCC 5334 / V8) protein is DNA polymerase III PolC-type.